A 521-amino-acid chain; its full sequence is Signal recognition particle protein (521 aa).

GTP is bound by residues 107–114, 196–200, and 254–257; these read GLQGSGKT, DTAGR, and TKLD. The segment at 436–505 is disordered; it reads GGMGIPGMGR…MPDGLNELPP (70 aa). The span at 447-462 shows a compositional bias: basic residues; that stretch reads SATRKSKGGKGKKRAR.

The protein belongs to the GTP-binding SRP family. SRP54 subfamily. In terms of assembly, part of the signal recognition particle protein translocation system, which is composed of SRP and FtsY.

Its subcellular location is the cytoplasm. The enzyme catalyses GTP + H2O = GDP + phosphate + H(+). Functionally, involved in targeting and insertion of nascent membrane proteins into the cytoplasmic membrane. Binds to the hydrophobic signal sequence of the ribosome-nascent chain (RNC) as it emerges from the ribosomes. The SRP-RNC complex is then targeted to the cytoplasmic membrane where it interacts with the SRP receptor FtsY. The protein is Signal recognition particle protein of Mycobacterium leprae (strain TN).